Reading from the N-terminus, the 632-residue chain is MVQASSHAEGGQGATRSLSLLVAAVGVVYGDIGTSPLYTLKEVFTGGYGVPVNHDGVLGILSLILWSLLWVVSFKYVMFILRADNQGEGGTMALTALARRATAAYPRLRTLMVICGLIGASLFYGDSMITPAVSVLSAVEGMGLAFDGIDHWVVPISLVVLVALFLVQKHGTEKIGKLFGPIMVTWFVVLAALGVHGISQSPEVLKAFNPGWAVNFFIVHPGMGVAILGAVVLALTGAEALYADMGHFGRKPIARAWFALVLPALVLNYFGQGAILLQNPDAARNPFYLLAPGWALLPLVGLATMATVIASQAVISGAFSLTRQAIQLGYIPRMHIQHTSSDEQGQIYIAAVNWTLMVGVVLLVIGFESSGALAAAYGVAVTGTMLMTTILVSAVMLLLWKWPPVLAVPILIGFLLVDGLFFAANVPKIVQGGAFPVLAGGVLFLLMSTWKRGKQILVERIDEGGLPLPVFISSIRIQPPHRVEGTAVFLTARPDAVPHALLHNMLHNQVLHSQVVLLTVVSEDRPRVPEQERFEVEAYGDGFFRVLLHFGFMDEPDVPAALKLCHLDGLDFTPMRTTYFLSRETVIASRLEGMSRWRGNLFAFLLKNANGNLRFFNLPLNRVIELGTQVEI.

The next 12 membrane-spanning stretches (helical) occupy residues 20 to 40, 60 to 80, 111 to 131, 146 to 166, 178 to 198, 216 to 236, 257 to 277, 289 to 309, 347 to 367, 379 to 399, 404 to 424, and 429 to 449; these read LLVA…LYTL, ILSL…VMFI, LMVI…MITP, FDGI…ALFL, LFGP…VHGI, FFIV…LALT, WFAL…AILL, LLAP…ATVI, IYIA…VIGF, VAVT…MLLL, PVLA…FFAA, and IVQG…LMST.

It belongs to the HAK/KUP transporter (TC 2.A.72) family.

It localises to the cell inner membrane. The catalysed reaction is K(+)(in) + H(+)(in) = K(+)(out) + H(+)(out). Functionally, transport of potassium into the cell. Likely operates as a K(+):H(+) symporter. This chain is Probable potassium transport system protein Kup, found in Pseudomonas putida (strain W619).